Consider the following 343-residue polypeptide: Uroporphyrinogen decarboxylase (343 aa).

Substrate is bound by residues 26–30 (RQAGR), Asp-75, Tyr-150, Ser-205, and His-319.

The protein belongs to the uroporphyrinogen decarboxylase family. In terms of assembly, homodimer.

Its subcellular location is the cytoplasm. It carries out the reaction uroporphyrinogen III + 4 H(+) = coproporphyrinogen III + 4 CO2. It participates in porphyrin-containing compound metabolism; protoporphyrin-IX biosynthesis; coproporphyrinogen-III from 5-aminolevulinate: step 4/4. Catalyzes the decarboxylation of four acetate groups of uroporphyrinogen-III to yield coproporphyrinogen-III. In Syntrophotalea carbinolica (strain DSM 2380 / NBRC 103641 / GraBd1) (Pelobacter carbinolicus), this protein is Uroporphyrinogen decarboxylase.